Consider the following 420-residue polypeptide: UDP-N-acetylglucosamine 1-carboxyvinyltransferase (420 aa).

22–23 (KN) provides a ligand contact to phosphoenolpyruvate. Arg93 lines the UDP-N-acetyl-alpha-D-glucosamine pocket. Cys117 serves as the catalytic Proton donor. At Cys117 the chain carries 2-(S-cysteinyl)pyruvic acid O-phosphothioketal. UDP-N-acetyl-alpha-D-glucosamine is bound by residues 162–165 (KVSV), Asp307, and Ile329.

It belongs to the EPSP synthase family. MurA subfamily.

The protein localises to the cytoplasm. It catalyses the reaction phosphoenolpyruvate + UDP-N-acetyl-alpha-D-glucosamine = UDP-N-acetyl-3-O-(1-carboxyvinyl)-alpha-D-glucosamine + phosphate. It functions in the pathway cell wall biogenesis; peptidoglycan biosynthesis. Cell wall formation. Adds enolpyruvyl to UDP-N-acetylglucosamine. The sequence is that of UDP-N-acetylglucosamine 1-carboxyvinyltransferase from Actinobacillus succinogenes (strain ATCC 55618 / DSM 22257 / CCUG 43843 / 130Z).